The chain runs to 498 residues: ATP synthase subunit beta, chloroplastic (498 aa).

172–179 (GGAGVGKT) contacts ATP.

This sequence belongs to the ATPase alpha/beta chains family. As to quaternary structure, F-type ATPases have 2 components, CF(1) - the catalytic core - and CF(0) - the membrane proton channel. CF(1) has five subunits: alpha(3), beta(3), gamma(1), delta(1), epsilon(1). CF(0) has four main subunits: a(1), b(1), b'(1) and c(9-12).

It localises to the plastid. It is found in the chloroplast thylakoid membrane. The catalysed reaction is ATP + H2O + 4 H(+)(in) = ADP + phosphate + 5 H(+)(out). Its function is as follows. Produces ATP from ADP in the presence of a proton gradient across the membrane. The catalytic sites are hosted primarily by the beta subunits. The protein is ATP synthase subunit beta, chloroplastic of Canella winterana (Wild cinnamon).